Reading from the N-terminus, the 81-residue chain is MKRAAIIFIRFYQKAISPLFPPTCRFYPTCSNYGLEAIQRFGFIKGSYLLIKRLLKCHPLHPGGFDPVPNQTDQKKEGDSD.

It belongs to the UPF0161 family.

It is found in the cell membrane. Functionally, could be involved in insertion of integral membrane proteins into the membrane. In Bacillus licheniformis (strain ATCC 14580 / DSM 13 / JCM 2505 / CCUG 7422 / NBRC 12200 / NCIMB 9375 / NCTC 10341 / NRRL NRS-1264 / Gibson 46), this protein is Putative membrane protein insertion efficiency factor 1.